A 189-amino-acid chain; its full sequence is Interferon alpha-C (189 aa).

The signal sequence occupies residues M1 to G23. 2 cysteine pairs are disulfide-bonded: C24/C122 and C52/C162.

This sequence belongs to the alpha/beta interferon family.

Its subcellular location is the secreted. Produced by macrophages, IFN-alpha have antiviral activities. Interferon stimulates the production of two enzymes: a protein kinase and an oligoadenylate synthetase. This Bos taurus (Bovine) protein is Interferon alpha-C (IFNAC).